We begin with the raw amino-acid sequence, 272 residues long: Ribosomal RNA small subunit methyltransferase A (272 aa).

6 residues coordinate S-adenosyl-L-methionine: N27, L29, G54, E75, D97, and N117.

It belongs to the class I-like SAM-binding methyltransferase superfamily. rRNA adenine N(6)-methyltransferase family. RsmA subfamily.

Its subcellular location is the cytoplasm. The enzyme catalyses adenosine(1518)/adenosine(1519) in 16S rRNA + 4 S-adenosyl-L-methionine = N(6)-dimethyladenosine(1518)/N(6)-dimethyladenosine(1519) in 16S rRNA + 4 S-adenosyl-L-homocysteine + 4 H(+). Its function is as follows. Specifically dimethylates two adjacent adenosines (A1518 and A1519) in the loop of a conserved hairpin near the 3'-end of 16S rRNA in the 30S particle. May play a critical role in biogenesis of 30S subunits. This chain is Ribosomal RNA small subunit methyltransferase A, found in Malacoplasma penetrans (strain HF-2) (Mycoplasma penetrans).